The chain runs to 1192 residues: Integrator complex subunit 2 (1192 aa).

Residues 420-436 (FVSLSFCMLLAFSTLVS) traverse the membrane as a helical segment.

It belongs to the Integrator subunit 2 family. As to quaternary structure, component of the Integrator complex, composed of core subunits INTS1, INTS2, INTS3, INTS4, INTS5, INTS6, INTS7, INTS8, INTS9/RC74, INTS10, INTS11/CPSF3L, INTS12, INTS13, INTS14 and INTS15. The core complex associates with protein phosphatase 2A subunits PPP2CA and PPP2R1A, to form the Integrator-PP2A (INTAC) complex.

It localises to the nucleus. Its subcellular location is the nucleus membrane. The protein resides in the cytoplasm. Functionally, component of the integrator complex, a multiprotein complex that terminates RNA polymerase II (Pol II) transcription in the promoter-proximal region of genes. The integrator complex provides a quality checkpoint during transcription elongation by driving premature transcription termination of transcripts that are unfavorably configured for transcriptional elongation: the complex terminates transcription by (1) catalyzing dephosphorylation of the C-terminal domain (CTD) of Pol II subunit POLR2A/RPB1 and SUPT5H/SPT5, (2) degrading the exiting nascent RNA transcript via endonuclease activity and (3) promoting the release of Pol II from bound DNA. The integrator complex is also involved in terminating the synthesis of non-coding Pol II transcripts, such as enhancer RNAs (eRNAs), small nuclear RNAs (snRNAs), telomerase RNAs and long non-coding RNAs (lncRNAs). The chain is Integrator complex subunit 2 (INTS2) from Gallus gallus (Chicken).